A 369-amino-acid polypeptide reads, in one-letter code: MALTLEELVKRFGGEIAGDAQCKVSGLAPLDQAGPQQLAFLANPKYLSQVETTRAGAVLIAPKDLEKLRAATDGQPAGPRMAGPLNFIVTPNPYAYFARVAQMFIDLATPPRAPGVHPSATIDPAAQVAASAVIGPHVTVEAGAVIEDGVQLDANVFIGRGTTIGAGSHLYPNASVYHGCKIGPRAIIHAGAVIGSDGFGFAPDFVGDGDARTGSWVKIPQVGGVTVGPDVEIGANTTIDRGAMADTVIDECVKIDNQVQIGHNCRIGAYTVIAGSAGIAGSTTIGRHCMIGGAAGIAGHVTLGDYVIITAKSGVSKSLPKAGIYTSAFPAVDHGEWNRSAALVRNLDKLRERIKALETALAAQGGTDA.

The active-site Proton acceptor is the His263.

This sequence belongs to the transferase hexapeptide repeat family. LpxD subfamily. In terms of assembly, homotrimer.

It catalyses the reaction a UDP-3-O-[(3R)-3-hydroxyacyl]-alpha-D-glucosamine + a (3R)-hydroxyacyl-[ACP] = a UDP-2-N,3-O-bis[(3R)-3-hydroxyacyl]-alpha-D-glucosamine + holo-[ACP] + H(+). It participates in bacterial outer membrane biogenesis; LPS lipid A biosynthesis. In terms of biological role, catalyzes the N-acylation of UDP-3-O-acylglucosamine using 3-hydroxyacyl-ACP as the acyl donor. Is involved in the biosynthesis of lipid A, a phosphorylated glycolipid that anchors the lipopolysaccharide to the outer membrane of the cell. This chain is UDP-3-O-acylglucosamine N-acyltransferase, found in Burkholderia ambifaria (strain MC40-6).